The primary structure comprises 248 residues: Large ribosomal subunit protein uL4 (248 aa).

2 disordered regions span residues 72–103 and 173–210; these read RSENVARRVPNAVSGRAAHPPKAEKDQTKSLN and GRSVRAGRGKTRGRKYSQPKSVLVVTSEEPSRAARNLS. The segment covering 92–103 has biased composition (basic and acidic residues); it reads PKAEKDQTKSLN. Positions 177–189 are enriched in basic residues; that stretch reads RAGRGKTRGRKYS.

The protein belongs to the universal ribosomal protein uL4 family. As to quaternary structure, part of the 50S ribosomal subunit.

Functionally, one of the primary rRNA binding proteins, this protein initially binds near the 5'-end of the 23S rRNA. It is important during the early stages of 50S assembly. It makes multiple contacts with different domains of the 23S rRNA in the assembled 50S subunit and ribosome. Its function is as follows. Forms part of the polypeptide exit tunnel. This chain is Large ribosomal subunit protein uL4, found in Halorubrum lacusprofundi (strain ATCC 49239 / DSM 5036 / JCM 8891 / ACAM 34).